We begin with the raw amino-acid sequence, 164 residues long: Thiol peroxidase (164 aa).

A Thioredoxin domain is found at 18–163; it reads INEGDFAPDF…FDAALAAYKN (146 aa). The active-site Cysteine sulfenic acid (-SOH) intermediate is C60. C60 and C93 are joined by a disulfide.

Belongs to the peroxiredoxin family. Tpx subfamily. Homodimer.

It carries out the reaction a hydroperoxide + [thioredoxin]-dithiol = an alcohol + [thioredoxin]-disulfide + H2O. Its function is as follows. Thiol-specific peroxidase that catalyzes the reduction of hydrogen peroxide and organic hydroperoxides to water and alcohols, respectively. Plays a role in cell protection against oxidative stress by detoxifying peroxides. This chain is Thiol peroxidase, found in Staphylococcus aureus (strain MRSA252).